A 434-amino-acid chain; its full sequence is UDP-N-acetylmuramate--L-alanine ligase (434 aa).

Gly110–Ser116 serves as a coordination point for ATP.

This sequence belongs to the MurCDEF family.

The protein localises to the cytoplasm. It carries out the reaction UDP-N-acetyl-alpha-D-muramate + L-alanine + ATP = UDP-N-acetyl-alpha-D-muramoyl-L-alanine + ADP + phosphate + H(+). Its pathway is cell wall biogenesis; peptidoglycan biosynthesis. In terms of biological role, cell wall formation. This chain is UDP-N-acetylmuramate--L-alanine ligase, found in Limosilactobacillus reuteri (strain DSM 20016) (Lactobacillus reuteri).